A 362-amino-acid polypeptide reads, in one-letter code: Aspartate carbamoyltransferase catalytic subunit (362 aa).

Residues Met1–Met22 form a disordered region. The span at Thr7 to Ser20 shows a compositional bias: low complexity. Residues Arg100 and Thr101 each coordinate carbamoyl phosphate. Lys128 provides a ligand contact to L-aspartate. Carbamoyl phosphate is bound by residues Arg150, His180, and Gln183. L-aspartate contacts are provided by Arg214 and Arg269. Carbamoyl phosphate is bound by residues Gly310 and Pro311.

It belongs to the aspartate/ornithine carbamoyltransferase superfamily. ATCase family. Heterododecamer (2C3:3R2) of six catalytic PyrB chains organized as two trimers (C3), and six regulatory PyrI chains organized as three dimers (R2).

It carries out the reaction carbamoyl phosphate + L-aspartate = N-carbamoyl-L-aspartate + phosphate + H(+). It functions in the pathway pyrimidine metabolism; UMP biosynthesis via de novo pathway; (S)-dihydroorotate from bicarbonate: step 2/3. In terms of biological role, catalyzes the condensation of carbamoyl phosphate and aspartate to form carbamoyl aspartate and inorganic phosphate, the committed step in the de novo pyrimidine nucleotide biosynthesis pathway. This Psychrobacter sp. (strain PRwf-1) protein is Aspartate carbamoyltransferase catalytic subunit.